The sequence spans 95 residues: HIG1 domain family member 1A, mitochondrial (95 aa).

Ser-2 is subject to N-acetylserine. Positions 2-93 (STNTDLSLSS…YQEFWANPKP (92 aa)) constitute an HIG1 domain. Residue Ser-8 is modified to Phosphoserine. 2 consecutive transmembrane segments (helical) span residues 28–48 (PFVPIGMAGFAAIVAYGLYKL) and 69–89 (GFVVGAMTLGMGYSMYQEFWA).

Associates with cytochrome c oxidase (COX, complex IV); proposed complex component. Also associates with respiratory chain supercomplexes.

It is found in the mitochondrion membrane. The protein resides in the mitochondrion inner membrane. Functionally, proposed subunit of cytochrome c oxidase (COX, complex IV), which is the terminal component of the mitochondrial respiratory chain that catalyzes the reduction of oxygen to water. May play a role in the assembly of respiratory supercomplexes. The chain is HIG1 domain family member 1A, mitochondrial (Higd1a) from Mus musculus (Mouse).